Consider the following 106-residue polypeptide: Serine rich endogenous peptide 7 (106 aa).

The N-terminal stretch at 1-26 is a signal peptide; that stretch reads MGKKCSSKFRQMLVLVLLLIVFTCLS. Composition is skewed to basic and acidic residues over residues 46-56 and 65-77; these read GIEDEGQERTH and RSVE…EGRR. The segment at 46 to 106 is disordered; the sequence is GIEDEGQERT…GGGRIPVAAS (61 aa). Short sequence motifs (SCOOP motif) lie at residues 58 to 72 and 86 to 100; these read LNSK…KTHH and GIRA…GGGR. Short sequence motifs (sxS motif essential for MIK2 binding) lie at residues 64 to 66 and 92 to 94; these read SRS and SKS.

Belongs to the serine rich endogenous peptide (SCOOP) phytocytokine family. As to quaternary structure, interacts with MIK2 (via extracellular leucine-rich repeat domain); this interaction triggers the formation of complex between MIK2 and the BAK1/SERK3 and SERK4 coreceptors, and subsequent BAK1 activation by phosphorylation. As to expression, mostly expressed in roots, and, to a lower extent, in seedlings shoots.

Its subcellular location is the cell membrane. The protein resides in the secreted. It is found in the extracellular space. It localises to the apoplast. Its function is as follows. Brassicaceae-specific phytocytokine (plant endogenous peptide released into the apoplast) perceived by MIK2 in a BAK1/SERK3 and SERK4 coreceptors-dependent manner, that modulates various physiological and antimicrobial processes including growth prevention and reactive oxygen species (ROS) response regulation. The sequence is that of Serine rich endogenous peptide 7 from Arabidopsis thaliana (Mouse-ear cress).